A 396-amino-acid polypeptide reads, in one-letter code: NADH-quinone oxidoreductase subunit D (396 aa).

Belongs to the complex I 49 kDa subunit family. As to quaternary structure, NDH-1 is composed of 14 different subunits. Subunits NuoB, C, D, E, F, and G constitute the peripheral sector of the complex.

It is found in the cell inner membrane. The enzyme catalyses a quinone + NADH + 5 H(+)(in) = a quinol + NAD(+) + 4 H(+)(out). Functionally, NDH-1 shuttles electrons from NADH, via FMN and iron-sulfur (Fe-S) centers, to quinones in the respiratory chain. The immediate electron acceptor for the enzyme in this species is believed to be ubiquinone. Couples the redox reaction to proton translocation (for every two electrons transferred, four hydrogen ions are translocated across the cytoplasmic membrane), and thus conserves the redox energy in a proton gradient. The sequence is that of NADH-quinone oxidoreductase subunit D from Bartonella bacilliformis (strain ATCC 35685 / KC583 / Herrer 020/F12,63).